Consider the following 445-residue polypeptide: tRNA-2-methylthio-N(6)-dimethylallyladenosine synthase (445 aa).

The 121-residue stretch at Lys2–Glu122 folds into the MTTase N-terminal domain. Positions 11, 47, 85, 157, 161, and 164 each coordinate [4Fe-4S] cluster. The Radical SAM core domain occupies Arg143–Arg378. The TRAM domain occupies Arg378–Ser440.

Belongs to the methylthiotransferase family. MiaB subfamily. Monomer. Requires [4Fe-4S] cluster as cofactor.

It localises to the cytoplasm. The catalysed reaction is N(6)-dimethylallyladenosine(37) in tRNA + (sulfur carrier)-SH + AH2 + 2 S-adenosyl-L-methionine = 2-methylsulfanyl-N(6)-dimethylallyladenosine(37) in tRNA + (sulfur carrier)-H + 5'-deoxyadenosine + L-methionine + A + S-adenosyl-L-homocysteine + 2 H(+). Functionally, catalyzes the methylthiolation of N6-(dimethylallyl)adenosine (i(6)A), leading to the formation of 2-methylthio-N6-(dimethylallyl)adenosine (ms(2)i(6)A) at position 37 in tRNAs that read codons beginning with uridine. The protein is tRNA-2-methylthio-N(6)-dimethylallyladenosine synthase of Methylobacterium radiotolerans (strain ATCC 27329 / DSM 1819 / JCM 2831 / NBRC 15690 / NCIMB 10815 / 0-1).